The sequence spans 179 residues: MIP18 family protein C144.16 (179 aa).

Residues 1 to 26 (MSANLQNENPEVKELNQLPSRVEEEE) are disordered.

It belongs to the MIP18 family.

May play a role in chromosome segregation through establishment of sister chromatid cohesion. The polypeptide is MIP18 family protein C144.16 (Schizosaccharomyces pombe (strain 972 / ATCC 24843) (Fission yeast)).